Consider the following 131-residue polypeptide: Phosphoribosyl-AMP cyclohydrolase (131 aa).

D82 provides a ligand contact to Mg(2+). C83 provides a ligand contact to Zn(2+). Mg(2+)-binding residues include D84 and D86. Zn(2+) is bound by residues C99 and C106.

The protein belongs to the PRA-CH family. In terms of assembly, homodimer. Requires Mg(2+) as cofactor. The cofactor is Zn(2+).

Its subcellular location is the cytoplasm. The catalysed reaction is 1-(5-phospho-beta-D-ribosyl)-5'-AMP + H2O = 1-(5-phospho-beta-D-ribosyl)-5-[(5-phospho-beta-D-ribosylamino)methylideneamino]imidazole-4-carboxamide. It functions in the pathway amino-acid biosynthesis; L-histidine biosynthesis; L-histidine from 5-phospho-alpha-D-ribose 1-diphosphate: step 3/9. Its function is as follows. Catalyzes the hydrolysis of the adenine ring of phosphoribosyl-AMP. The polypeptide is Phosphoribosyl-AMP cyclohydrolase (Methanospirillum hungatei JF-1 (strain ATCC 27890 / DSM 864 / NBRC 100397 / JF-1)).